The chain runs to 468 residues: Putative FBD-associated F-box protein At5g22720 (468 aa).

An F-box domain is found at 22–68 (EDLISQLPDSLITQILFYLQTKKAVTTSVLSKRWRSLWLSTPGLVLI). An FBD domain is found at 375 to 433 (ELRLSFVPRCLLSSLEFVEIKGCSRSNMERVKYVGEPIETKLARYFVENSTILKKLVLP).

This Arabidopsis thaliana (Mouse-ear cress) protein is Putative FBD-associated F-box protein At5g22720.